Reading from the N-terminus, the 265-residue chain is 5'-nucleotidase SurE (265 aa).

Residues D12, D13, S43, and N91 each coordinate a divalent metal cation.

Belongs to the SurE nucleotidase family. A divalent metal cation is required as a cofactor.

The protein localises to the cytoplasm. It carries out the reaction a ribonucleoside 5'-phosphate + H2O = a ribonucleoside + phosphate. Its function is as follows. Nucleotidase that shows phosphatase activity on nucleoside 5'-monophosphates. This chain is 5'-nucleotidase SurE, found in Haloquadratum walsbyi (strain DSM 16790 / HBSQ001).